The chain runs to 318 residues: Ubiquitin-like domain-containing CTD phosphatase 1 (318 aa).

A Ubiquitin-like domain is found at L3–S81. K117 is subject to N6-acetyllysine. The FCP1 homology domain maps to P133–I294. Mg(2+) contacts are provided by D143, D145, and D253.

Mg(2+) serves as cofactor.

The protein localises to the nucleus. It carries out the reaction O-phospho-L-seryl-[protein] + H2O = L-seryl-[protein] + phosphate. It catalyses the reaction O-phospho-L-threonyl-[protein] + H2O = L-threonyl-[protein] + phosphate. Its function is as follows. Dephosphorylates 26S nuclear proteasomes, thereby decreasing their proteolytic activity. Recruited to the 19S regulatory particle of the 26S proteasome through its interaction with 19S component PSMD2/RPN1. Once recruited, dephosphorylates 19S component PSMC2/RPT1 which impairs PSMC2 ATPase activity and disrupts 26S proteasome assembly. Has also been reported to stimulate the proteolytic activity of the 26S proteasome. The chain is Ubiquitin-like domain-containing CTD phosphatase 1 (Ublcp1) from Rattus norvegicus (Rat).